The chain runs to 430 residues: Inner membrane transport protein YbaT (430 aa).

The Cytoplasmic portion of the chain corresponds to 1 to 14 (MMNTEGNNGNKPLG). A helical membrane pass occupies residues 15–35 (LWNVVSIGIGAMVGAGIFALL). Residues 36-38 (GQA) lie on the Periplasmic side of the membrane. The chain crosses the membrane as a helical span at residues 39–59 (ALLMEASTWVAFAFGGIVAMF). Residues 60–88 (SGYAYARLGASYPSNGGIIDFFRRGLGNG) lie on the Cytoplasmic side of the membrane. The chain crosses the membrane as a helical span at residues 89-109 (VFSLALSLLYLLTLAVSIAMV). Residues 110 to 128 (ARAFGAYAVQFLHEGSQEE) lie on the Periplasmic side of the membrane. A helical transmembrane segment spans residues 129-149 (HLILLYALGIIAVMTLFNSLS). The Cytoplasmic segment spans residues 150–157 (NHAVGRLE). The chain crosses the membrane as a helical span at residues 158–178 (VILVGIKMMILLLLIIAGVWS). The Periplasmic portion of the chain corresponds to 179–192 (LQPAHISVSAPPSS). The chain crosses the membrane as a helical span at residues 193 to 213 (GAFFSCIGITFLAYAGFGMMA). The Cytoplasmic segment spans residues 214–228 (NAADKVKDPQVIMPR). The chain crosses the membrane as a helical span at residues 229–249 (AFLVAIGVTTLLYISLALVLL). The Periplasmic segment spans residues 250–272 (SDVSALELEKYADTAVAQAASPL). Residues 273 to 293 (LGHVGYVIVVIGALLATASAI) traverse the membrane as a helical segment. Residues 294–325 (NANLFAVFNIMDNMGSERELPKLMNKSLWRQS) lie on the Cytoplasmic side of the membrane. Residues 326–346 (TWGNIIVVVLIMLMTAALNLG) form a helical membrane-spanning segment. Residue Ser347 is a topological domain, periplasmic. A helical membrane pass occupies residues 348-368 (LASVASATFLICYLAVFVVAI). The Cytoplasmic portion of the chain corresponds to 369–379 (RLRHDIHASLP). A helical membrane pass occupies residues 380–400 (ILIVGTLVMLLVIVGFIYSLW). At 401 to 403 (SQG) the chain is on the periplasmic side. Residues 404-424 (SRALIWIIGSLLLSLIVAMVM) traverse the membrane as a helical segment. Topologically, residues 425-430 (KRNKTV) are cytoplasmic.

This sequence belongs to the amino acid-polyamine-organocation (APC) superfamily.

The protein resides in the cell inner membrane. In terms of biological role, probable amino-acid or metabolite transport protein. The polypeptide is Inner membrane transport protein YbaT (ybaT) (Escherichia coli (strain K12)).